Here is a 552-residue protein sequence, read N- to C-terminus: Kumamolisin (552 aa).

Residues 1 to 17 (MSDMEKPWKEEEKREVL) show a composition bias toward basic and acidic residues. The disordered stretch occupies residues 1–34 (MSDMEKPWKEEEKREVLAGHARRQAPQAVDKGPV). The 354-residue stretch at 193–546 (AYTPLDVAQA…IRLLQALLPS (354 aa)) folds into the Peptidase S53 domain. Catalysis depends on charge relay system residues E266, D270, and S466. Ca(2+) is bound by residues D504, I505, G522, G524, and D526.

Forms monomeric and dimeric crystals. Requires Ca(2+) as cofactor. In terms of processing, autocatalytically processed.

The protein resides in the secreted. It catalyses the reaction The enzyme preferentially hydrolyzes peptides having an Ala or Pro residue at P2 position and prefers such charged amino acid residues as Glu or Arg at the P2' position. In the oxidized insulin B chain, kumamolysin preferentially cleaves between Leu(15) and Tyr(16).. Inactivated at 22.4 and 37 degrees Celsius, but not at 60 degrees Celsius, by aldehyde-type inhibitors such as acetyl-Ile-Ala-Phe-CHO and acetyl-Ile-Pro-Phe-CHO. Insensitive to the known carboxyl proteinase inhibitors pepstatin, diazoacetyl-DL-norleucine methyl ester (DAN) and 1,2-epoxy-3-(p-nitrophenoxy)propane (EPNP). Not inhibited by Ala-Ala-Phe-chloromethylketone, an inhibitor of the human tripeptidyl-peptidase 1. Its function is as follows. Thermostable pepstatin-insensitive serine-carboxyl proteinase. Preferentially hydrolyzes synthetic peptides having an Ala or Pro residue at the P2 position and charged amino acids such as Glu or Arg at the P2' position. In vitro, specifically hydrolyzes the Leu-15-Tyr-16 peptide bond in oxidized insulin B-chain. Additional cleavage of oxidized insulin B-chain at Phe-25-Tyr-26 is detected at a considerably lower rate. Can hydrolyze collagen and the chromogenic substrate azocoll. Shows lower activity with albumin and casein. Shows very weak tripeptidyl peptidase activity. This Bacillus sp. (strain MN-32) protein is Kumamolisin.